Consider the following 180-residue polypeptide: Putative adenylate kinase (180 aa).

ATP-binding residues include glycine 10, glycine 12, lysine 13, threonine 14, and threonine 15. The interval 30–50 (NLRDFALEKGCGREVDGEVEV) is NMP. The segment at 99–109 (ERGYSKEKIGE) is LID. Positions 100 and 138 each coordinate ATP.

It belongs to the adenylate kinase family. AK6 subfamily. In terms of assembly, interacts with uS11. Not a structural component of 40S pre-ribosomes, but transiently interacts with them by binding to uS11.

The catalysed reaction is AMP + ATP = 2 ADP. The enzyme catalyses ATP + H2O = ADP + phosphate + H(+). Its function is as follows. Broad-specificity nucleoside monophosphate (NMP) kinase that catalyzes the reversible transfer of the terminal phosphate group between nucleoside triphosphates and monophosphates. Also has ATPase activity. Involved in the late maturation steps of the 30S ribosomal particles, specifically 16S rRNA maturation. While NMP activity is not required for ribosome maturation, ATPase activity is. Associates transiently with small ribosomal subunit protein uS11. ATP hydrolysis breaks the interaction with uS11. May temporarily remove uS11 from the ribosome to enable a conformational change of the ribosomal RNA that is needed for the final maturation step of the small ribosomal subunit. The polypeptide is Putative adenylate kinase (Pyrococcus abyssi (strain GE5 / Orsay)).